Here is a 233-residue protein sequence, read N- to C-terminus: Transcriptional regulatory protein PrrA (233 aa).

The 115-residue stretch at 9–123 (RVLVVDDDSD…ELVARVKALL (115 aa)) folds into the Response regulatory domain. Position 58 is a 4-aspartylphosphate (Asp-58). The segment at residues 134-232 (SETITVGPLE…VRGVGFVLRM (99 aa)) is a DNA-binding region (ompR/PhoB-type).

Post-translationally, phosphorylated by PrrB at Asp-58.

The protein localises to the cytoplasm. In terms of biological role, member of the two-component regulatory system PrrB/PrrA that is involved specifically in early intracellular multiplication of Mycobacterium and is essential for its viability. Upon phosphorylation by PrrB, functions as a transcription regulator by direct binding to promoter regions of target genes to positively regulate their expression. Autoregulates its own expression. This Mycobacterium bovis (strain ATCC BAA-935 / AF2122/97) protein is Transcriptional regulatory protein PrrA (prrA).